We begin with the raw amino-acid sequence, 432 residues long: Gamma-glutamyl phosphate reductase (432 aa).

The protein belongs to the gamma-glutamyl phosphate reductase family.

The protein resides in the cytoplasm. It catalyses the reaction L-glutamate 5-semialdehyde + phosphate + NADP(+) = L-glutamyl 5-phosphate + NADPH + H(+). The protein operates within amino-acid biosynthesis; L-proline biosynthesis; L-glutamate 5-semialdehyde from L-glutamate: step 2/2. Functionally, catalyzes the NADPH-dependent reduction of L-glutamate 5-phosphate into L-glutamate 5-semialdehyde and phosphate. The product spontaneously undergoes cyclization to form 1-pyrroline-5-carboxylate. The protein is Gamma-glutamyl phosphate reductase of Brachyspira hyodysenteriae (strain ATCC 49526 / WA1).